A 279-amino-acid chain; its full sequence is Phosphonoacetaldehyde hydrolase (279 aa).

Residue D20 is the Nucleophile of the active site. Residues D20 and A22 each contribute to the Mg(2+) site. K62 acts as the Schiff-base intermediate with substrate in catalysis. Residue D196 coordinates Mg(2+).

Belongs to the HAD-like hydrolase superfamily. PhnX family. As to quaternary structure, homodimer. The cofactor is Mg(2+).

It catalyses the reaction phosphonoacetaldehyde + H2O = acetaldehyde + phosphate + H(+). Functionally, involved in phosphonate degradation. This Aeromonas hydrophila subsp. hydrophila (strain ATCC 7966 / DSM 30187 / BCRC 13018 / CCUG 14551 / JCM 1027 / KCTC 2358 / NCIMB 9240 / NCTC 8049) protein is Phosphonoacetaldehyde hydrolase.